An 82-amino-acid polypeptide reads, in one-letter code: Putative membrane protein insertion efficiency factor (82 aa).

This sequence belongs to the UPF0161 family.

Its subcellular location is the cell inner membrane. Could be involved in insertion of integral membrane proteins into the membrane. The polypeptide is Putative membrane protein insertion efficiency factor (Colwellia psychrerythraea (strain 34H / ATCC BAA-681) (Vibrio psychroerythus)).